Consider the following 331-residue polypeptide: D/L-glyceraldehyde reductase (331 aa).

Residue Y51 is the Proton donor of the active site. Residue H114 participates in substrate binding. Residue 213-276 coordinates NADP(+); it reads SAFGNNTKGL…SVTKARIAEN (64 aa).

The protein belongs to the aldo/keto reductase family.

The enzyme catalyses glycerol + NADP(+) = L-glyceraldehyde + NADPH + H(+). It carries out the reaction glycerol + NADP(+) = D-glyceraldehyde + NADPH + H(+). The protein operates within carbohydrate acid metabolism. In terms of biological role, mediates the conversion of L-glyceraldehyde to glycerol in D-galacturonate catabolic process. Also able to reduce D-glyceraldehyde. This Hypocrea jecorina (Trichoderma reesei) protein is D/L-glyceraldehyde reductase (gld1).